The sequence spans 2209 residues: Kinetochore-associated protein 1 (2209 aa).

Thr13 carries the post-translational modification Phosphothreonine; by TTK. Ser15 bears the Phosphoserine; by TTK mark. Residue Thr1035 is modified to Phosphothreonine. Ser1045 carries the post-translational modification Phosphoserine.

As to quaternary structure, interacts with ZW10; the interaction is required for stable association with the kinetochore. Component of the RZZ complex composed of KNTC1/ROD, ZW10 and ZWILCH; in the complex interacts directly with ZWILCH. In terms of tissue distribution, high expression in testis.

The protein resides in the cytoplasm. The protein localises to the nucleus. Its subcellular location is the chromosome. It is found in the centromere. It localises to the kinetochore. The protein resides in the cytoskeleton. The protein localises to the spindle. Functionally, essential component of the mitotic checkpoint, which prevents cells from prematurely exiting mitosis. Required for the assembly of the dynein-dynactin and MAD1-MAD2 complexes onto kinetochores. Its function related to the spindle assembly machinery is proposed to depend on its association in the mitotic RZZ complex. In Homo sapiens (Human), this protein is Kinetochore-associated protein 1 (KNTC1).